The following is a 135-amino-acid chain: Sex-regulated protein janus-A (135 aa).

K37 contacts substrate. Residue H63 is the Proton acceptor of the active site. 104–106 (SQG) provides a ligand contact to substrate.

This sequence belongs to the janus family. In terms of tissue distribution, somatic and germline cells. Isoform B is expressed in both sexes and in somatic and germ line cells. Isoform A is expressed in males and is germ line specific.

Functionally, janA and janB regulate somatic sex differentiation. The polypeptide is Sex-regulated protein janus-A (janA) (Drosophila melanogaster (Fruit fly)).